Consider the following 201-residue polypeptide: Glutathione peroxidase 1, mitochondrial (201 aa).

Residues 1–27 constitute a mitochondrion transit peptide; sequence MLLTRKNVAVRPARAARRDVRAMSLLG. The active site involves Sec-75. Position 75 (Sec-75) is a non-standard amino acid, selenocysteine.

It is found in the mitochondrion. It catalyses the reaction 2 glutathione + H2O2 = glutathione disulfide + 2 H2O. May constitute a glutathione peroxidase-like protective system against oxidative stresses. Hydrogen peroxide, tert-butyl hydroperoxide and cumene, but not phosphatidylcholine hydroperoxide, can act as acceptors. The polypeptide is Glutathione peroxidase 1, mitochondrial (Chlamydomonas reinhardtii (Chlamydomonas smithii)).